A 259-amino-acid polypeptide reads, in one-letter code: Ribonuclease HII (259 aa).

Residues Thr70 to Glu258 form the RNase H type-2 domain. Positions 76, 77, and 168 each coordinate a divalent metal cation.

This sequence belongs to the RNase HII family. It depends on Mn(2+) as a cofactor. Mg(2+) is required as a cofactor.

The protein localises to the cytoplasm. The enzyme catalyses Endonucleolytic cleavage to 5'-phosphomonoester.. Endonuclease that specifically degrades the RNA of RNA-DNA hybrids. The polypeptide is Ribonuclease HII (Streptococcus pneumoniae (strain ATCC 700669 / Spain 23F-1)).